We begin with the raw amino-acid sequence, 284 residues long: uncharacterized protein (284 aa).

The N-terminal stretch at 1–24 is a signal peptide; the sequence is MLYSRESRTTVLFLALVTSLTVLC. At 25–84 the chain is on the cytoplasmic side; sequence HSVDVTTVFTTSTITEITTVTAAPQPQNKAETALNTATNIIQTMQFLFNCAPFKWKGPLK. Residues 85 to 104 form a helical membrane-spanning segment; that stretch reads ITSCALNFIVLLLTAWGYLL. Topologically, residues 105 to 284 are extracellular; it reads KYLQENKLNS…SVHMYSSSLL (180 aa). N-linked (GlcNAc...) asparagine glycosylation is present at Asn-270.

This sequence to yeast YNL019c.

It localises to the cell membrane. This is an uncharacterized protein from Saccharomyces cerevisiae (strain ATCC 204508 / S288c) (Baker's yeast).